Here is a 207-residue protein sequence, read N- to C-terminus: Octanoyltransferase (207 aa).

Positions 27-202 (GETPDELWIV…HLETRLARPQ (176 aa)) constitute a BPL/LPL catalytic domain. Residues 66–73 (RGGQITYH), 133–135 (SLG), and 146–148 (GLS) each bind substrate. Catalysis depends on cysteine 164, which acts as the Acyl-thioester intermediate.

It belongs to the LipB family.

The protein resides in the cytoplasm. It catalyses the reaction octanoyl-[ACP] + L-lysyl-[protein] = N(6)-octanoyl-L-lysyl-[protein] + holo-[ACP] + H(+). The protein operates within protein modification; protein lipoylation via endogenous pathway; protein N(6)-(lipoyl)lysine from octanoyl-[acyl-carrier-protein]: step 1/2. Its function is as follows. Catalyzes the transfer of endogenously produced octanoic acid from octanoyl-acyl-carrier-protein onto the lipoyl domains of lipoate-dependent enzymes. Lipoyl-ACP can also act as a substrate although octanoyl-ACP is likely to be the physiological substrate. This Laribacter hongkongensis (strain HLHK9) protein is Octanoyltransferase.